The chain runs to 518 residues: Retinal dehydrogenase 2 (518 aa).

Y168 bears the Phosphotyrosine mark. NAD(+) is bound by residues 184-186 (IPW), 210-213 (KPAE), and 264-266 (STE). E286 functions as the Proton acceptor in the catalytic mechanism. Residue C320 is the Nucleophile of the active site. At S351 the chain carries Phosphoserine. NAD(+) is bound by residues 366–370 (KQYNK) and E417.

This sequence belongs to the aldehyde dehydrogenase family. Homotetramer.

The protein localises to the cytoplasm. It carries out the reaction retinal + NAD(+) + H2O = retinoate + NADH + 2 H(+). It catalyses the reaction all-trans-retinal + NAD(+) + H2O = all-trans-retinoate + NADH + 2 H(+). The catalysed reaction is all-trans-13,14-dihydroretinal + NAD(+) + H2O = all-trans-13,14-dihydroretinoate + NADH + 2 H(+). It participates in cofactor metabolism; retinol metabolism. Functionally, catalyzes the NAD-dependent oxidation of aldehyde substrates, such as all-trans-retinal and all-trans-13,14-dihydroretinal, to their corresponding carboxylic acids, all-trans-retinoate and all-trans-13,14-dihydroretinoate, respectively. Retinoate signaling is critical for the transcriptional control of many genes, for instance it is crucial for initiation of meiosis in both male and female. Recognizes retinal as substrate, both in its free form and when bound to cellular retinol-binding protein. Can metabolize octanal and decanal, but has only very low activity with benzaldehyde, acetaldehyde and propanal. Displays complete lack of activity with citral. This is Retinal dehydrogenase 2 (ALDH1A2) from Homo sapiens (Human).